The primary structure comprises 268 residues: Undecaprenyl-diphosphatase (268 aa).

7 helical membrane passes run 47 to 67 (FTILIQLGAILAILALYFAKL), 83 to 103 (FVIGVLVAFLPAAVIGALAGG), 109 to 129 (LFNPWVVCFSLIVGGAILLWV), 144 to 164 (FPLPMYLYIGCAQCLAMIPGV), 184 to 204 (AAEFSFFLAIPTMVGAFVYDL), 217 to 237 (LIVAIGFAVSFVTAIIVVKSF), and 246 to 266 (FTLFAWWRVIVGTLGLIALAL).

This sequence belongs to the UppP family.

The protein localises to the cell inner membrane. It catalyses the reaction di-trans,octa-cis-undecaprenyl diphosphate + H2O = di-trans,octa-cis-undecaprenyl phosphate + phosphate + H(+). Catalyzes the dephosphorylation of undecaprenyl diphosphate (UPP). Confers resistance to bacitracin. The chain is Undecaprenyl-diphosphatase from Rhodopseudomonas palustris (strain BisB18).